A 271-amino-acid chain; its full sequence is ATP synthase subunit delta (271 aa).

The protein belongs to the ATPase delta chain family. In terms of assembly, F-type ATPases have 2 components, F(1) - the catalytic core - and F(0) - the membrane proton channel. F(1) has five subunits: alpha(3), beta(3), gamma(1), delta(1), epsilon(1). F(0) has three main subunits: a(1), b(2) and c(10-14). The alpha and beta chains form an alternating ring which encloses part of the gamma chain. F(1) is attached to F(0) by a central stalk formed by the gamma and epsilon chains, while a peripheral stalk is formed by the delta and b chains.

It is found in the cell membrane. Its function is as follows. F(1)F(0) ATP synthase produces ATP from ADP in the presence of a proton or sodium gradient. F-type ATPases consist of two structural domains, F(1) containing the extramembraneous catalytic core and F(0) containing the membrane proton channel, linked together by a central stalk and a peripheral stalk. During catalysis, ATP synthesis in the catalytic domain of F(1) is coupled via a rotary mechanism of the central stalk subunits to proton translocation. This protein is part of the stalk that links CF(0) to CF(1). It either transmits conformational changes from CF(0) to CF(1) or is implicated in proton conduction. The polypeptide is ATP synthase subunit delta (Corynebacterium aurimucosum (strain ATCC 700975 / DSM 44827 / CIP 107346 / CN-1) (Corynebacterium nigricans)).